We begin with the raw amino-acid sequence, 428 residues long: Adenylosuccinate synthetase (428 aa).

Residues Gly-12–Lys-18 and Gly-40–Thr-42 contribute to the GTP site. Asp-13 serves as the catalytic Proton acceptor. Residues Asp-13 and Gly-40 each contribute to the Mg(2+) site. IMP is bound by residues Asp-13–Lys-16, Asn-38–His-41, Thr-128, Arg-142, Gln-223, Thr-238, and Arg-302. Catalysis depends on His-41, which acts as the Proton donor. Val-298 to Arg-304 lines the substrate pocket. GTP is bound by residues Arg-304, Lys-330 to Asp-332, and Gly-413 to Gly-415.

This sequence belongs to the adenylosuccinate synthetase family. As to quaternary structure, homodimer. Requires Mg(2+) as cofactor.

The protein resides in the cytoplasm. It carries out the reaction IMP + L-aspartate + GTP = N(6)-(1,2-dicarboxyethyl)-AMP + GDP + phosphate + 2 H(+). It functions in the pathway purine metabolism; AMP biosynthesis via de novo pathway; AMP from IMP: step 1/2. Its function is as follows. Plays an important role in the de novo pathway of purine nucleotide biosynthesis. Catalyzes the first committed step in the biosynthesis of AMP from IMP. The sequence is that of Adenylosuccinate synthetase from Acidothermus cellulolyticus (strain ATCC 43068 / DSM 8971 / 11B).